We begin with the raw amino-acid sequence, 130 residues long: Small ribosomal subunit protein uS9 (130 aa).

Residues 109–130 form a disordered region; that stretch reads RKKERKKYGQRAARARYQYSKR.

This sequence belongs to the universal ribosomal protein uS9 family.

This chain is Small ribosomal subunit protein uS9, found in Nitratidesulfovibrio vulgaris (strain DSM 19637 / Miyazaki F) (Desulfovibrio vulgaris).